The primary structure comprises 339 residues: Anthranilate phosphoribosyltransferase (339 aa).

5-phospho-alpha-D-ribose 1-diphosphate-binding positions include Gly-79, 82 to 83, Ser-87, 89 to 92, 107 to 115, and Ser-119; these read GD, NIST, and KHGNRSISS. Gly-79 contributes to the anthranilate binding site. Position 91 (Ser-91) interacts with Mg(2+). Residue Asn-110 participates in anthranilate binding. Residue Arg-165 participates in anthranilate binding. Residues Asp-224 and Glu-225 each contribute to the Mg(2+) site.

The protein belongs to the anthranilate phosphoribosyltransferase family. Homodimer. It depends on Mg(2+) as a cofactor.

It carries out the reaction N-(5-phospho-beta-D-ribosyl)anthranilate + diphosphate = 5-phospho-alpha-D-ribose 1-diphosphate + anthranilate. It functions in the pathway amino-acid biosynthesis; L-tryptophan biosynthesis; L-tryptophan from chorismate: step 2/5. Catalyzes the transfer of the phosphoribosyl group of 5-phosphorylribose-1-pyrophosphate (PRPP) to anthranilate to yield N-(5'-phosphoribosyl)-anthranilate (PRA). The protein is Anthranilate phosphoribosyltransferase of Listeria monocytogenes serovar 1/2a (strain ATCC BAA-679 / EGD-e).